We begin with the raw amino-acid sequence, 437 residues long: F-box/FBD/LRR-repeat protein At5g22700 (437 aa).

Residues 5 to 51 enclose the F-box domain; it reads GDRISSLPDELLCQILSNLPTKNAVTTSILSTRWRSIWLSTPVLDID. LRR repeat units lie at residues 86-113, 134-160, 161-186, 187-210, 215-240, 272-297, and 322-350; these read RDDV…EVDC, SLRL…HLEE, NIYY…TVVR, IVDI…KLVL, GWFI…SLKD, PVTF…TISG, and NARF…VLGL. Residues 361 to 406 enclose the FBD domain; that stretch reads RVSSVPPCFLSSLEFVEIRSRLCRKRYVMKVARYFAKNSVMLKKFV.

This is F-box/FBD/LRR-repeat protein At5g22700 from Arabidopsis thaliana (Mouse-ear cress).